A 192-amino-acid polypeptide reads, in one-letter code: Pyridoxal 5'-phosphate synthase subunit PdxT (192 aa).

46–48 (GES) serves as a coordination point for L-glutamine. The active-site Nucleophile is cysteine 78. L-glutamine is bound by residues arginine 106 and 135 to 136 (IR). Active-site charge relay system residues include histidine 171 and glutamate 173.

This sequence belongs to the glutaminase PdxT/SNO family. In the presence of PdxS, forms a dodecamer of heterodimers. Only shows activity in the heterodimer.

The enzyme catalyses aldehydo-D-ribose 5-phosphate + D-glyceraldehyde 3-phosphate + L-glutamine = pyridoxal 5'-phosphate + L-glutamate + phosphate + 3 H2O + H(+). It catalyses the reaction L-glutamine + H2O = L-glutamate + NH4(+). It participates in cofactor biosynthesis; pyridoxal 5'-phosphate biosynthesis. Catalyzes the hydrolysis of glutamine to glutamate and ammonia as part of the biosynthesis of pyridoxal 5'-phosphate. The resulting ammonia molecule is channeled to the active site of PdxS. This chain is Pyridoxal 5'-phosphate synthase subunit PdxT, found in Kosmotoga olearia (strain ATCC BAA-1733 / DSM 21960 / TBF 19.5.1).